The chain runs to 458 residues: Cysteine--tRNA ligase (458 aa).

Cys29 contacts Zn(2+). The 'HIGH' region motif lies at 31–41 (PTVYDNPHIGN). 3 residues coordinate Zn(2+): Cys214, His239, and Glu243. Residues 272–276 (KMSKS) carry the 'KMSKS' region motif. Position 275 (Lys275) interacts with ATP.

This sequence belongs to the class-I aminoacyl-tRNA synthetase family. As to quaternary structure, monomer. It depends on Zn(2+) as a cofactor.

Its subcellular location is the cytoplasm. The catalysed reaction is tRNA(Cys) + L-cysteine + ATP = L-cysteinyl-tRNA(Cys) + AMP + diphosphate. This chain is Cysteine--tRNA ligase, found in Rickettsia bellii (strain OSU 85-389).